Here is a 304-residue protein sequence, read N- to C-terminus: tRNA (guanine(9)-N1)-methyltransferase (304 aa).

2 stretches are compositionally biased toward basic and acidic residues: residues 1 to 26 (MENK…KNET) and 42 to 72 (RQQE…KRKI). Residues 1–72 (MENKDALDIG…LRKEERKRKI (72 aa)) are disordered. In terms of domain architecture, SAM-dependent MTase TRM10-type spans 81–276 (QKKRIRLGKV…EVIPKRKGIL (196 aa)). S-adenosyl-L-methionine contacts are provided by residues Leu-183, Gly-203, 207-211 (DKNRY), Cys-215, Leu-229, and 241-243 (KIL). Catalysis depends on Asp-207, which acts as the Proton acceptor. The segment at 282 to 304 (SFDVSEDTRSQSNQSDSELEKEN) is disordered. Ser-296 carries the phosphoserine modification.

Belongs to the class IV-like SAM-binding methyltransferase superfamily. TRM10 family. In terms of assembly, monomer.

The protein resides in the cytoplasm. The protein localises to the nucleus. It carries out the reaction guanosine(9) in tRNA + S-adenosyl-L-methionine = N(1)-methylguanosine(9) in tRNA + S-adenosyl-L-homocysteine + H(+). Functionally, S-adenosyl-L-methionine-dependent guanine N(1)-methyltransferase that catalyzes the formation of N(1)-methylguanine at position 9 (m1G9) in cytoplasmic tRNA. The protein is tRNA (guanine(9)-N1)-methyltransferase of Schizosaccharomyces pombe (strain 972 / ATCC 24843) (Fission yeast).